A 365-amino-acid polypeptide reads, in one-letter code: Snurportin-1 (365 aa).

The region spanning 10–72 is the IBB domain; the sequence is GGVALAAPNS…RLAEGDWAGV (63 aa). 2 disordered regions span residues 15–34 and 69–90; these read AAPN…KGRG and WAGV…EMEV. Residues 73 to 90 show a composition bias toward acidic residues; sequence ESDEDGGEDGDGEEEMEV. Residues 129–131 form an interaction with m3G-cap structure region; sequence GKR. Residues 211–333 are necessary for binding to the m3G-cap structure; it reads LSSKIQEEEG…GKAQPSAEAA (123 aa). The segment at 317–365 is disordered; sequence RSKKLAAGKAQPSAEAAARNGHYELEHLSTPQPANSAQGQEEAGSQMEN. Residues 345–355 are compositionally biased toward polar residues; the sequence is STPQPANSAQG.

The protein belongs to the snurportin family.

It is found in the nucleus. It localises to the cytoplasm. Its function is as follows. Functions as an U snRNP-specific nuclear import adapter. Involved in the trimethylguanosine (m3G)-cap-dependent nuclear import of U snRNPs. Binds specifically to the terminal m3G-cap U snRNAs. The protein is Snurportin-1 (SNUPN) of Gallus gallus (Chicken).